Consider the following 248-residue polypeptide: MNFYRSSIISQIIKYNRRLAKSIICEDDSQIITLTAFVNQCLWCHKRVSVSAILLTTDNKILVCNRRDSFLYSEIIRTRNMSRKKRLFLNYSNYLNKQERSILSSFFSLDPATIDNDRIDAIYPGGILKRGENVPECLSREIKEEVNIDNSFVFIDTRFFIHGIIEDTIINKFFEVIFFVGRISLTSDQIIDTFKSNHEIKDLIFLDPNSGNGLQYEIAKYALDTAKLKCYGHRGCYYESLKKLTEDD.

A Nudix hydrolase domain is found at 45–227 (HKRVSVSAIL…IAKYALDTAK (183 aa)). A Nudix box motif is present at residues 125-147 (GGILKRGENVPECLSREIKEEVN). Glutamate 132 is a Mg(2+) binding site. Catalysis depends on glutamate 141, which acts as the Nucleophile. Glutamate 145 lines the Mn(2+) pocket. Aspartate 167 lines the Mg(2+) pocket.

This sequence belongs to the Nudix hydrolase family. It depends on Mg(2+) as a cofactor. Mn(2+) is required as a cofactor.

The protein resides in the host mitochondrion. Decapping enzyme that remove the protective 5'-cap from both host and viral mRNAs to commit transcripts for decay by the cellular exonuclease XRN1. Preferentially targets spliced mRNAs and since all viral genes are intronless, it preferentially targets host over viral transcripts. Acceleration of the turnover of cellular transcripts promotes the shutoff of host protein synthesis and therefore diminish the magnitude of antiviral response. The protein is mRNA-decapping protein OPG122 (OPG122) of Variola virus (isolate Human/India/Ind3/1967) (VARV).